Consider the following 387-residue polypeptide: Homoserine O-succinyltransferase (387 aa).

The region spanning 45 to 354 (NAVLVCHALN…DAPHGHDAFL (310 aa)) is the AB hydrolase-1 domain. Residue Ser-151 is the Nucleophile of the active site. A substrate-binding site is contributed by Arg-221. Residues Asp-317 and His-350 contribute to the active site. Residue Asp-351 coordinates substrate.

Belongs to the AB hydrolase superfamily. MetX family. As to quaternary structure, homodimer.

It localises to the cytoplasm. The catalysed reaction is L-homoserine + succinyl-CoA = O-succinyl-L-homoserine + CoA. The protein operates within amino-acid biosynthesis; L-methionine biosynthesis via de novo pathway; O-succinyl-L-homoserine from L-homoserine: step 1/1. In terms of biological role, transfers a succinyl group from succinyl-CoA to L-homoserine, forming succinyl-L-homoserine. The protein is Homoserine O-succinyltransferase of Methylibium petroleiphilum (strain ATCC BAA-1232 / LMG 22953 / PM1).